A 173-amino-acid polypeptide reads, in one-letter code: 3-isopropylmalate dehydratase small subunit (173 aa).

The protein belongs to the LeuD family. LeuD type 2 subfamily. As to quaternary structure, heterodimer of LeuC and LeuD.

It carries out the reaction (2R,3S)-3-isopropylmalate = (2S)-2-isopropylmalate. The protein operates within amino-acid biosynthesis; L-leucine biosynthesis; L-leucine from 3-methyl-2-oxobutanoate: step 2/4. Functionally, catalyzes the isomerization between 2-isopropylmalate and 3-isopropylmalate, via the formation of 2-isopropylmaleate. The protein is 3-isopropylmalate dehydratase small subunit of Caldicellulosiruptor saccharolyticus (strain ATCC 43494 / DSM 8903 / Tp8T 6331).